Consider the following 711-residue polypeptide: Mitochondrial intermediate peptidase (711 aa).

The transit peptide at 1–33 (MLLAAGARYARRLCGRGAAAALQGRTGRSCARD) directs the protein to the mitochondrion. At lysine 124 the chain carries N6-acetyllysine. Histidine 493 contacts Zn(2+). Residue glutamate 494 is part of the active site. 2 residues coordinate Zn(2+): histidine 497 and histidine 500.

Belongs to the peptidase M3 family. Monomer. It depends on Zn(2+) as a cofactor.

Its subcellular location is the mitochondrion matrix. It catalyses the reaction Release of an N-terminal octapeptide as second stage of processing of some proteins imported into the mitochondrion.. With respect to regulation, activity is divalent cation-dependent. It is stimulated by manganese, magnesium or calcium ions and reversibly inhibited by zinc, cobalt and iron. Cleaves proteins, imported into the mitochondrion, to their mature size. The protein is Mitochondrial intermediate peptidase (Mipep) of Mus musculus (Mouse).